Here is a 387-residue protein sequence, read N- to C-terminus: Protein RecA (387 aa).

An ATP-binding site is contributed by 80 to 87 (GPESSGKT). The segment at 348–387 (LDDSEVAETEEETTASKTKAKAKKEEKAVETEEIELELED) is disordered. Acidic residues-rich tracts occupy residues 349–360 (DDSEVAETEEET) and 378–387 (TEEIELELED).

It belongs to the RecA family.

The protein localises to the cytoplasm. In terms of biological role, can catalyze the hydrolysis of ATP in the presence of single-stranded DNA, the ATP-dependent uptake of single-stranded DNA by duplex DNA, and the ATP-dependent hybridization of homologous single-stranded DNAs. It interacts with LexA causing its activation and leading to its autocatalytic cleavage. The chain is Protein RecA from Lactococcus lactis subsp. cremoris (strain MG1363).